The sequence spans 251 residues: tRNA (guanine-N(7)-)-methyltransferase (251 aa).

S-adenosyl-L-methionine contacts are provided by residues G71, 94 to 95, 128 to 129, and L148; these read EL and NS. Residue D151 is part of the active site. Residue 226–228 coordinates S-adenosyl-L-methionine; the sequence is TEE.

It belongs to the class I-like SAM-binding methyltransferase superfamily. TrmB family.

Its subcellular location is the nucleus. The catalysed reaction is guanosine(46) in tRNA + S-adenosyl-L-methionine = N(7)-methylguanosine(46) in tRNA + S-adenosyl-L-homocysteine. It participates in tRNA modification; N(7)-methylguanine-tRNA biosynthesis. Its function is as follows. Catalyzes the formation of N(7)-methylguanine at position 46 (m7G46) in tRNA. The polypeptide is tRNA (guanine-N(7)-)-methyltransferase (Arabidopsis thaliana (Mouse-ear cress)).